The following is a 442-amino-acid chain: MADNTNSTGSFSTLVDWQRCSVEEQRQLLTRPAISASDRITAVVSDILTNVKSRGDGALRDYSAQFDKVQVDAIRITDAEIAAASARLGDEVKQAMAIAVRNIETFHNAQKLPIVDIETQPGVRCQQITRPIATVGLYIPGGSAPLPSTVLMLGTPSRIAGCRRVVLCSPPPIADEILYAAQLCGIKEVFQLGGAQAIAAMAFGTDSVPKVDKIFGPGNAYVTEAKRQVSQQLDGAAIDMPAGPSEVLVIADSGATPAFVASDLLSQAEHGPDSQVILLTPDAVMAKAVADAVEEQLTQLSRADIARQALASSRVIVARDLAQCIEISNQYGPEHLIIQTRDAESLVDSITSAGSVFLGDWSPESAGDYASGTNHVLPTYGYTSTYSSLGLADFQKRMTVQQLTPQGLLQLAPTIEILAQAEQLTAHKNAVTLRVAALKEQA.

NAD(+) contacts are provided by Tyr-138, Gln-196, and Asn-219. Substrate is bound by residues Ser-245, Gln-267, and His-270. Gln-267 and His-270 together coordinate Zn(2+). Residues Glu-334 and His-335 each act as proton acceptor in the active site. His-335, Asp-368, Glu-422, and His-427 together coordinate substrate. Asp-368 provides a ligand contact to Zn(2+). His-427 serves as a coordination point for Zn(2+).

This sequence belongs to the histidinol dehydrogenase family. Homodimer. The cofactor is Zn(2+).

It catalyses the reaction L-histidinol + 2 NAD(+) + H2O = L-histidine + 2 NADH + 3 H(+). Its pathway is amino-acid biosynthesis; L-histidine biosynthesis; L-histidine from 5-phospho-alpha-D-ribose 1-diphosphate: step 9/9. In terms of biological role, catalyzes the sequential NAD-dependent oxidations of L-histidinol to L-histidinaldehyde and then to L-histidine. This is Histidinol dehydrogenase from Pectobacterium atrosepticum (strain SCRI 1043 / ATCC BAA-672) (Erwinia carotovora subsp. atroseptica).